We begin with the raw amino-acid sequence, 185 residues long: ATP synthase subunit delta (185 aa).

It belongs to the ATPase delta chain family. F-type ATPases have 2 components, F(1) - the catalytic core - and F(0) - the membrane proton channel. F(1) has five subunits: alpha(3), beta(3), gamma(1), delta(1), epsilon(1). F(0) has three main subunits: a(1), b(2) and c(10-14). The alpha and beta chains form an alternating ring which encloses part of the gamma chain. F(1) is attached to F(0) by a central stalk formed by the gamma and epsilon chains, while a peripheral stalk is formed by the delta and b chains.

It is found in the cell inner membrane. F(1)F(0) ATP synthase produces ATP from ADP in the presence of a proton or sodium gradient. F-type ATPases consist of two structural domains, F(1) containing the extramembraneous catalytic core and F(0) containing the membrane proton channel, linked together by a central stalk and a peripheral stalk. During catalysis, ATP synthesis in the catalytic domain of F(1) is coupled via a rotary mechanism of the central stalk subunits to proton translocation. Its function is as follows. This protein is part of the stalk that links CF(0) to CF(1). It either transmits conformational changes from CF(0) to CF(1) or is implicated in proton conduction. The protein is ATP synthase subunit delta of Phocaeicola vulgatus (strain ATCC 8482 / DSM 1447 / JCM 5826 / CCUG 4940 / NBRC 14291 / NCTC 11154) (Bacteroides vulgatus).